The sequence spans 229 residues: Type III pantothenate kinase (229 aa).

6 to 13 (NIGNSRQH) is a binding site for ATP. Substrate is bound by residues Tyr77 and 81 to 84 (GIDR). The Proton acceptor role is filled by Asp83. Asp103 is a K(+) binding site. Thr106 contacts ATP. Residue Thr159 coordinates substrate.

It belongs to the type III pantothenate kinase family. Homodimer. Requires NH4(+) as cofactor. K(+) serves as cofactor.

It is found in the cytoplasm. It carries out the reaction (R)-pantothenate + ATP = (R)-4'-phosphopantothenate + ADP + H(+). It participates in cofactor biosynthesis; coenzyme A biosynthesis; CoA from (R)-pantothenate: step 1/5. Catalyzes the phosphorylation of pantothenate (Pan), the first step in CoA biosynthesis. In Gloeobacter violaceus (strain ATCC 29082 / PCC 7421), this protein is Type III pantothenate kinase.